The sequence spans 192 residues: Fe/S biogenesis protein NfuA (192 aa).

Cysteine 149 and cysteine 152 together coordinate [4Fe-4S] cluster.

This sequence belongs to the NfuA family. In terms of assembly, homodimer. [4Fe-4S] cluster is required as a cofactor.

Functionally, involved in iron-sulfur cluster biogenesis. Binds a 4Fe-4S cluster, can transfer this cluster to apoproteins, and thereby intervenes in the maturation of Fe/S proteins. Could also act as a scaffold/chaperone for damaged Fe/S proteins. In Shewanella loihica (strain ATCC BAA-1088 / PV-4), this protein is Fe/S biogenesis protein NfuA.